Here is a 190-residue protein sequence, read N- to C-terminus: MPTPTKGPRLGGGPAHERLMLANLAAALFEHKRITTTVTKAKRLKPYAERLVTFAKRGDLASRRRVLGLISNKGVVHELFTDIAQAVENRDGGYTRITKIGNRKGDNAPMAVIELVLEPVSAKQAVVAEATQAAAKAAPAAEEAPAEEAPAAEEAATEEAPAAEETATEEAAAEEAPAAEEAPAEEKDAK.

A compositionally biased stretch (low complexity) spans 135–165 (AKAAPAAEEAPAEEAPAAEEAATEEAPAAEE). Residues 135-190 (AKAAPAAEEAPAEEAPAAEEAATEEAPAAEETATEEAAAEEAPAAEEAPAEEKDAK) are disordered.

The protein belongs to the bacterial ribosomal protein bL17 family. Part of the 50S ribosomal subunit. Contacts protein L32.

The polypeptide is Large ribosomal subunit protein bL17 (Pseudarthrobacter chlorophenolicus (strain ATCC 700700 / DSM 12829 / CIP 107037 / JCM 12360 / KCTC 9906 / NCIMB 13794 / A6) (Arthrobacter chlorophenolicus)).